Consider the following 900-residue polypeptide: Alanine--tRNA ligase (900 aa).

Zn(2+)-binding residues include His-580, His-584, Cys-683, and His-687.

Belongs to the class-II aminoacyl-tRNA synthetase family. It depends on Zn(2+) as a cofactor.

Its subcellular location is the cytoplasm. It carries out the reaction tRNA(Ala) + L-alanine + ATP = L-alanyl-tRNA(Ala) + AMP + diphosphate. In terms of biological role, catalyzes the attachment of alanine to tRNA(Ala) in a two-step reaction: alanine is first activated by ATP to form Ala-AMP and then transferred to the acceptor end of tRNA(Ala). Also edits incorrectly charged Ser-tRNA(Ala) and Gly-tRNA(Ala) via its editing domain. This is Alanine--tRNA ligase from Mycolicibacterium paratuberculosis (strain ATCC BAA-968 / K-10) (Mycobacterium paratuberculosis).